A 695-amino-acid chain; its full sequence is Lupanine 17-hydroxylase [cytochrome c] (695 aa).

The first 26 residues, 1-26, serve as a signal peptide directing secretion; it reads MSANKNIWIIRLGVAFVCVAIGAAQA. Residues 598–677 enclose the Cytochrome c domain; it reads AMAESGRHIF…ALQAFILQKA (80 aa). Cysteine 612, cysteine 615, and histidine 616 together coordinate heme c.

The protein belongs to the bacterial PQQ dehydrogenase family. In terms of assembly, monomer. The cofactor is pyrroloquinoline quinone. It depends on heme c as a cofactor.

It is found in the periplasm. It catalyses the reaction lupanine + 2 Fe(III)-[cytochrome c] + H2O = 17-hydroxylupanine + 2 Fe(II)-[cytochrome c] + 2 H(+). Functionally, catalyzes the first reaction in the catabolism of the alkaloid lupanine. It dehydrogenates lupanine, which can then be hydrated to produce 17-hydroxylupanine. The sequence is that of Lupanine 17-hydroxylase [cytochrome c] (luh) from Pseudomonas sp.